The sequence spans 143 residues: Pathogenesis-related protein P2 (143 aa).

The signal sequence occupies residues 1-23; it reads MERVNKLCVAFFVINMMMAVAAA. In terms of domain architecture, Barwin spans 24 to 143; it reads QSATNVRATY…LNVNYEFVNC (120 aa). 3 cysteine pairs are disulfide-bonded: Cys-52–Cys-84, Cys-73–Cys-107, and Cys-87–Cys-143.

The protein localises to the secreted. It is found in the cell wall. In Solanum lycopersicum (Tomato), this protein is Pathogenesis-related protein P2.